A 1581-amino-acid chain; its full sequence is Mediator of RNA polymerase II transcription subunit 1 (1581 aa).

The interval 1–670 (MKAQGETEES…YGSSPLERQN (670 aa)) is interaction with the Mediator complex and THRA. The tract at residues 16 to 590 (MSSLLERLHA…SIKDRHESVG (575 aa)) is interaction with ESR1. Interaction with the Mediator complex regions lie at residues 108–212 (FYVE…GYLT) and 215–390 (SGGH…SLQG). Residues 405–644 (PLILNLIRHQ…MAGNTKNHPM (240 aa)) form an interaction with THRA region. The segment at 542–789 (PASSPGYGMT…TDILSDIAEE (248 aa)) is interaction with VDR. Serine 588 is modified (phosphoserine). The short motif at 604–608 (LTSLL) is the LXXLL motif 1 element. Disordered stretches follow at residues 609-705 (QITG…HQTE), 792-820 (KLPSTSDDCPAIGTPLRDSSSSGHSQSTL), 874-893 (SQSGFGEEYFDESSQSGDND), and 948-1566 (EHHS…DFMI). Positions 622–632 (PTPPHHTPPPV) are enriched in pro residues. Residues 622–701 (PTPPHHTPPP…SSRLPPEKPK (80 aa)) form an interaction with PPARGC1A and THRA region. The short motif at 645-649 (LMNLL) is the LXXLL motif 2 element. Positions 655–675 (QDFSTLYGSSPLERQNSSSGS) are enriched in polar residues. The segment at 656-1066 (DFSTLYGSSP…TPPIPKITIQ (411 aa)) is interaction with ESR1. Serine 664 bears the Phosphoserine mark. The tract at residues 681–715 (CSGSNKTKKKKSSRLPPEKPKHQTEDDFQRELFSM) is interaction with GATA1. Positions 696–705 (PPEKPKHQTE) are enriched in basic and acidic residues. Serine 795 carries the post-translational modification Phosphoserine. Phosphothreonine is present on threonine 805. Residues 808 to 820 (RDSSSSGHSQSTL) are compositionally biased toward polar residues. The short motif at 875–902 (QSGFGEEYFDESSQSGDNDDFKGFASQA) is the Integrase domain-binding motif (IBM) element. 2 positions are modified to phosphoserine: serine 887 and serine 953. The span at 963–974 (LGKEKTQKRVKE) shows a compositional bias: basic and acidic residues. Residue threonine 1032 is modified to Phosphothreonine; by MAPK1 or MAPK3. Over residues 1034–1045 (PTSTGGSKSPGS) the composition is skewed to low complexity. Phosphothreonine is present on residues threonine 1051 and threonine 1057. Low complexity-rich tracts occupy residues 1078–1094 (SSHSQYTSSGSVSSSGS) and 1101–1156 (SSSS…PGSS). Position 1156 is a phosphoserine (serine 1156). Residues 1162–1195 (GLSSGSSSTKMKPQGKPSSLMNPSLSKPNISPSH) are compositionally biased toward polar residues. An N6-acetyllysine modification is found at lysine 1177. A Phosphoserine modification is found at serine 1207. A Phosphothreonine modification is found at threonine 1215. 2 stretches are compositionally biased toward low complexity: residues 1218-1227 (SSKAKSPISS) and 1234-1293 (MSGT…SKGK). Serine 1223 carries the post-translational modification Phosphoserine. Positions 1249-1421 (LGSSGSLSQK…KPGESSGEGL (173 aa)) are interaction with TP53. A Phosphoserine modification is found at serine 1302. Residues 1330 to 1345 (GVSTNSSSHPMSSKHN) show a composition bias toward polar residues. Serine 1347 carries the post-translational modification Phosphoserine. A compositionally biased stretch (basic and acidic residues) spans 1352 to 1364 (QGKREKSDKDKSK). Phosphoserine is present on residues serine 1403 and serine 1433. Polar residues-rich tracts occupy residues 1425 to 1440 (MASSKNYGSPLISGST) and 1448 to 1482 (PSHSKSPAYTPQNLDSESESGSSIAEKSYQNSPSS). Residue threonine 1440 is modified to Phosphothreonine. Threonine 1457 bears the Phosphothreonine; by MAPK1 or MAPK3 mark. Serine 1463, serine 1465, serine 1479, serine 1481, and serine 1482 each carry phosphoserine. Basic residues predominate over residues 1496–1505 (KHKKHKKEKK). The segment covering 1506–1522 (KVKDKDRDRDRDKDRDK) has biased composition (basic and acidic residues). Residue lysine 1529 is modified to N6-acetyllysine. Residues 1533–1552 (WSKSPISSDQSLSMTSNTIL) are compositionally biased toward polar residues.

The protein belongs to the Mediator complex subunit 1 family. Component of the Mediator complex, which is composed of MED1, MED4, MED6, MED7, MED8, MED9, MED10, MED11, MED12, MED13, MED13L, MED14, MED15, MED16, MED17, MED18, MED19, MED20, MED21, MED22, MED23, MED24, MED25, MED26, MED27, MED29, MED30, MED31, CCNC, CDK8 and CDC2L6/CDK11. The MED12, MED13, CCNC and CDK8 subunits form a distinct module termed the CDK8 module. Mediator containing the CDK8 module is less active than Mediator lacking this module in supporting transcriptional activation. Individual preparations of the Mediator complex lacking one or more distinct subunits have been variously termed ARC, CRSP, DRIP, PC2, SMCC and TRAP. This subunit specifically interacts with a number of nuclear receptors in a ligand-dependent fashion including AR, ESR1, ESR2, PPARA, PPARG, RORA, RXRA, RXRG, THRA, THRB and VDR. Interacts with CTNNB1, GABPA, GLI3, PPARGC1A and TP53. Interacts with YWHAH. Interacts with CLOCK; this interaction requires the presence of THRAP3. Interacts with GATA1 and CCAR1. Interacts with NR4A3. Interacts (via IBM motif) with PSIP1 (via IBD domain); phosphorylation increases its affinity for PSIP1. Interacts with USP22. Post-translationally, phosphorylated by MAPK1 or MAPK3 during G2/M phase which may enhance protein stability and promote entry into the nucleolus. Phosphorylation increases its interaction with PSIP1. In terms of tissue distribution, ubiquitously expressed.

The protein localises to the nucleus. Its function is as follows. Component of the Mediator complex, a coactivator involved in the regulated transcription of nearly all RNA polymerase II-dependent genes. Mediator functions as a bridge to convey information from gene-specific regulatory proteins to the basal RNA polymerase II transcription machinery. Mediator is recruited to promoters by direct interactions with regulatory proteins and serves as a scaffold for the assembly of a functional preinitiation complex with RNA polymerase II and the general transcription factors. Acts as a coactivator for GATA1-mediated transcriptional activation during erythroid differentiation of K562 erythroleukemia cells. The protein is Mediator of RNA polymerase II transcription subunit 1 (MED1) of Homo sapiens (Human).